Reading from the N-terminus, the 502-residue chain is Histidine--tRNA ligase (502 aa).

This sequence belongs to the class-II aminoacyl-tRNA synthetase family. As to quaternary structure, homodimer.

It localises to the cytoplasm. The enzyme catalyses tRNA(His) + L-histidine + ATP = L-histidyl-tRNA(His) + AMP + diphosphate + H(+). This is Histidine--tRNA ligase (hisS) from Brucella suis biovar 1 (strain 1330).